Consider the following 291-residue polypeptide: Formamidopyrimidine-DNA glycosylase (291 aa).

Pro-2 (schiff-base intermediate with DNA) is an active-site residue. Catalysis depends on Glu-3, which acts as the Proton donor. Lys-60 functions as the Proton donor; for beta-elimination activity in the catalytic mechanism. DNA-binding residues include His-108 and Arg-127. The FPG-type zinc-finger motif lies at 257-291 (WVYRRGGQACRICSTPIRRESLCGRGTHWCPNCQR). Arg-281 functions as the Proton donor; for delta-elimination activity in the catalytic mechanism.

The protein belongs to the FPG family. As to quaternary structure, monomer. The cofactor is Zn(2+).

The catalysed reaction is Hydrolysis of DNA containing ring-opened 7-methylguanine residues, releasing 2,6-diamino-4-hydroxy-5-(N-methyl)formamidopyrimidine.. It carries out the reaction 2'-deoxyribonucleotide-(2'-deoxyribose 5'-phosphate)-2'-deoxyribonucleotide-DNA = a 3'-end 2'-deoxyribonucleotide-(2,3-dehydro-2,3-deoxyribose 5'-phosphate)-DNA + a 5'-end 5'-phospho-2'-deoxyribonucleoside-DNA + H(+). Involved in base excision repair of DNA damaged by oxidation or by mutagenic agents. Acts as a DNA glycosylase that recognizes and removes damaged bases. Has a preference for oxidized purines, such as 7,8-dihydro-8-oxoguanine (8-oxoG). Has AP (apurinic/apyrimidinic) lyase activity and introduces nicks in the DNA strand. Cleaves the DNA backbone by beta-delta elimination to generate a single-strand break at the site of the removed base with both 3'- and 5'-phosphates. The chain is Formamidopyrimidine-DNA glycosylase from Prochlorococcus marinus (strain MIT 9313).